Consider the following 412-residue polypeptide: 1-deoxy-D-xylulose 5-phosphate reductoisomerase (412 aa).

Residues Thr-5, Gly-6, Ser-7, Ile-8, Gly-31, Asn-33, and Asn-125 each coordinate NADPH. 1-deoxy-D-xylulose 5-phosphate is bound at residue Lys-126. NADPH is bound at residue Glu-127. Asp-151 serves as a coordination point for Mn(2+). The 1-deoxy-D-xylulose 5-phosphate site is built by Ser-152, Glu-153, Ser-189, and His-212. Mn(2+) is bound at residue Glu-153. Gly-218 lines the NADPH pocket. 1-deoxy-D-xylulose 5-phosphate-binding residues include Ser-225, Asn-230, Lys-231, and Glu-234. Glu-234 provides a ligand contact to Mn(2+).

The protein belongs to the DXR family. It depends on Mg(2+) as a cofactor. Mn(2+) is required as a cofactor.

The enzyme catalyses 2-C-methyl-D-erythritol 4-phosphate + NADP(+) = 1-deoxy-D-xylulose 5-phosphate + NADPH + H(+). Its pathway is isoprenoid biosynthesis; isopentenyl diphosphate biosynthesis via DXP pathway; isopentenyl diphosphate from 1-deoxy-D-xylulose 5-phosphate: step 1/6. Functionally, catalyzes the NADPH-dependent rearrangement and reduction of 1-deoxy-D-xylulose-5-phosphate (DXP) to 2-C-methyl-D-erythritol 4-phosphate (MEP). This is 1-deoxy-D-xylulose 5-phosphate reductoisomerase from Prochlorococcus marinus (strain MIT 9313).